Consider the following 515-residue polypeptide: Protein translocase subunit SecD (515 aa).

Residues 6–26 (LYSLIFIIILTAFAVWVDLPG) traverse the membrane as a helical segment. Positions 141 to 186 (AITNGNQNQNSTKNGTPTPGTTPTPESTPQANQTPVAANVTPTPED) are disordered. Positions 150-169 (NSTKNGTPTPGTTPTPESTP) are enriched in low complexity. The span at 170-186 (QANQTPVAANVTPTPED) shows a compositional bias: polar residues. Transmembrane regions (helical) follow at residues 322–342 (RSIR…ILYY), 344–364 (LPGF…FALF), 367–387 (IPVT…GMAV), 427–447 (ISTL…GASV), and 450–470 (GFAI…IFVT).

This sequence belongs to the SecD/SecF family. SecD subfamily. Forms a complex with SecF. Part of the essential Sec protein translocation apparatus which comprises SecA, SecYEG and auxiliary proteins SecDF. Other proteins may also be involved.

The protein resides in the cell membrane. In terms of biological role, part of the Sec protein translocase complex. Interacts with the SecYEG preprotein conducting channel. SecDF uses the proton motive force (PMF) to complete protein translocation after the ATP-dependent function of SecA. The chain is Protein translocase subunit SecD from Thermobaculum terrenum (strain ATCC BAA-798 / CCMEE 7001 / YNP1).